The sequence spans 132 residues: Flagellar assembly factor FliW (132 aa).

This sequence belongs to the FliW family. As to quaternary structure, interacts with translational regulator CsrA and flagellin(s).

The protein localises to the cytoplasm. In terms of biological role, acts as an anti-CsrA protein, binds CsrA and prevents it from repressing translation of its target genes, one of which is flagellin. Binds to flagellin and participates in the assembly of the flagellum. This Borreliella afzelii (strain PKo) (Borrelia afzelii) protein is Flagellar assembly factor FliW.